The primary structure comprises 328 residues: 3,4-dihydroxyphenylacetaldehyde synthase 2 (328 aa).

N111 is a catalytic residue. N6-(pyridoxal phosphate)lysine is present on K222.

This sequence belongs to the group II decarboxylase family. The cofactor is pyridoxal 5'-phosphate.

The enzyme catalyses L-dopa + O2 + H2O + H(+) = 3,4-dihydroxyphenylacetaldehyde + H2O2 + NH4(+) + CO2. Its function is as follows. Catalyzes the decarboxylation-oxidative deamination of L-3,4-dihydroxyphenylalanine (L-DOPA) to 3,4-dihydroxylphenylacetaldehyde (DHPAA). Involved in cuticle development. Probably responsible for the protein cross-linking during the development of flexible cuticles. The sequence is that of 3,4-dihydroxyphenylacetaldehyde synthase 2 (amd) from Drosophila simulans (Fruit fly).